The sequence spans 185 residues: MISSNDFRTGTSIELDGSVWRVVEFLHVKPGKGSAFVRTKLKNAQTGSVVEKTFRAGETVPQAILDKRTMQHTYKEGEQFVFMDMETYEEVRLTEAQIGDRVKYLMEEMEVNVLFWNSQVIDVELPNTVVLEVTETDPGVKGDTATGGTKPAIVSTGAQVNVPLFISIGERIKIDTRTDTYLGRE.

This sequence belongs to the elongation factor P family.

It is found in the cytoplasm. It participates in protein biosynthesis; polypeptide chain elongation. In terms of biological role, involved in peptide bond synthesis. Stimulates efficient translation and peptide-bond synthesis on native or reconstituted 70S ribosomes in vitro. Probably functions indirectly by altering the affinity of the ribosome for aminoacyl-tRNA, thus increasing their reactivity as acceptors for peptidyl transferase. The protein is Elongation factor P of Picosynechococcus sp. (strain ATCC 27264 / PCC 7002 / PR-6) (Agmenellum quadruplicatum).